Consider the following 378-residue polypeptide: Erythronate-4-phosphate dehydrogenase (378 aa).

Positions 45 and 66 each coordinate substrate. NAD(+)-binding residues include Asp-146 and Thr-175. Arg-208 is an active-site residue. NAD(+) is bound at residue Asp-232. Glu-237 is an active-site residue. His-254 functions as the Proton donor in the catalytic mechanism. Gly-257 is a binding site for NAD(+). Substrate is bound at residue Tyr-258.

Belongs to the D-isomer specific 2-hydroxyacid dehydrogenase family. PdxB subfamily. In terms of assembly, homodimer.

The protein resides in the cytoplasm. It catalyses the reaction 4-phospho-D-erythronate + NAD(+) = (R)-3-hydroxy-2-oxo-4-phosphooxybutanoate + NADH + H(+). The protein operates within cofactor biosynthesis; pyridoxine 5'-phosphate biosynthesis; pyridoxine 5'-phosphate from D-erythrose 4-phosphate: step 2/5. Its function is as follows. Catalyzes the oxidation of erythronate-4-phosphate to 3-hydroxy-2-oxo-4-phosphonooxybutanoate. The protein is Erythronate-4-phosphate dehydrogenase of Klebsiella pneumoniae (strain 342).